Reading from the N-terminus, the 1051-residue chain is DNA-directed RNA polymerase subunit beta (1051 aa).

It belongs to the RNA polymerase beta chain family. In plastids the minimal PEP RNA polymerase catalytic core is composed of four subunits: alpha, beta, beta', and beta''. When a (nuclear-encoded) sigma factor is associated with the core the holoenzyme is formed, which can initiate transcription (Potential).

It is found in the plastid. Its subcellular location is the apicoplast. The enzyme catalyses RNA(n) + a ribonucleoside 5'-triphosphate = RNA(n+1) + diphosphate. Functionally, DNA-dependent RNA polymerase catalyzes the transcription of DNA into RNA using the four ribonucleoside triphosphates as substrates. The polypeptide is DNA-directed RNA polymerase subunit beta (rpoB) (Toxoplasma gondii).